A 175-amino-acid chain; its full sequence is NADH-ubiquinone oxidoreductase chain 6 (175 aa).

Transmembrane regions (helical) follow at residues 1 to 21 (MMTY…VGFS), 25 to 45 (SPIY…GIVL), 47 to 67 (FGGS…MLVV), 88 to 108 (AVLG…CYIL), and 149 to 169 (YGTW…LVIM).

Belongs to the complex I subunit 6 family. Core subunit of respiratory chain NADH dehydrogenase (Complex I) which is composed of 45 different subunits.

It localises to the mitochondrion inner membrane. The enzyme catalyses a ubiquinone + NADH + 5 H(+)(in) = a ubiquinol + NAD(+) + 4 H(+)(out). Functionally, core subunit of the mitochondrial membrane respiratory chain NADH dehydrogenase (Complex I) which catalyzes electron transfer from NADH through the respiratory chain, using ubiquinone as an electron acceptor. Essential for the catalytic activity and assembly of complex I. The chain is NADH-ubiquinone oxidoreductase chain 6 (MT-ND6) from Phoca vitulina (Harbor seal).